Here is a 405-residue protein sequence, read N- to C-terminus: Cytochrome P450 130 (405 aa).

Substrate-binding residues include Asp93 and His97. Heme is bound by residues Arg101, Gly243, Arg295, Tyr318, Ser348, His352, and Cys354.

This sequence belongs to the cytochrome P450 family. Homodimer. Heme serves as cofactor.

The protein is Cytochrome P450 130 (cyp130) of Mycobacterium tuberculosis (strain CDC 1551 / Oshkosh).